The chain runs to 247 residues: Coproheme decarboxylase (247 aa).

Fe-coproporphyrin III contacts are provided by residues arginine 129, 143–147 (YPMDK), histidine 170, glutamine 183, and serine 221. Tyrosine 143 is an active-site residue.

It belongs to the ChdC family. Type 1 subfamily. Requires Fe-coproporphyrin III as cofactor.

The catalysed reaction is Fe-coproporphyrin III + 2 H2O2 + 2 H(+) = heme b + 2 CO2 + 4 H2O. The enzyme catalyses Fe-coproporphyrin III + H2O2 + H(+) = harderoheme III + CO2 + 2 H2O. It catalyses the reaction harderoheme III + H2O2 + H(+) = heme b + CO2 + 2 H2O. Its pathway is porphyrin-containing compound metabolism; protoheme biosynthesis. In terms of biological role, involved in coproporphyrin-dependent heme b biosynthesis. Catalyzes the decarboxylation of Fe-coproporphyrin III (coproheme) to heme b (protoheme IX), the last step of the pathway. The reaction occurs in a stepwise manner with a three-propionate intermediate. In Bacillus cereus (strain ATCC 10987 / NRS 248), this protein is Coproheme decarboxylase.